Reading from the N-terminus, the 681-residue chain is GAS2-like protein 1 (681 aa).

An N-acetylalanine modification is found at Ala-2. The Calponin-homology (CH) domain occupies 27–148 (EAMKEDLAEW…CLLEVARRGA (122 aa)). 3 disordered regions span residues 168-204 (LRAA…TPSD), 278-509 (STAH…PLQL), and 536-681 (ASVT…DSWM). Residues 186-199 (ETAPAPGTPARGPR) are compositionally biased toward low complexity. Thr-193 carries the post-translational modification Phosphothreonine. Positions 203-275 (SDLRNLDELV…HYLDKHDPCR (73 aa)) constitute a GAR domain. Residues 291-303 (FSPQRVSPTTSPR) are compositionally biased toward polar residues. Ser-306 and Ser-316 each carry phosphoserine. Over residues 327–342 (STKEGPETPPRPRDQL) the composition is skewed to basic and acidic residues. Thr-334 is subject to Phosphothreonine. Residues Ser-352 and Ser-355 each carry the phosphoserine modification. A compositionally biased stretch (low complexity) spans 354–365 (DSDSSASSAQSG). Residues 370 to 381 (RSDDTGTGPRRE) are compositionally biased toward basic and acidic residues. The residue at position 391 (Thr-391) is a Phosphothreonine. Ser-394 is subject to Phosphoserine. The segment covering 404–413 (QSRDRLDRGR) has biased composition (basic and acidic residues). Ser-436, Ser-438, Ser-479, and Ser-486 each carry phosphoserine. Residues 437–454 (QSREEQAVLLVRRDRDGQ) are compositionally biased toward basic and acidic residues. Residues 475-493 (PRARSPAAPRLSRVSSPSP) are compositionally biased toward low complexity. Arg-487 carries the post-translational modification Omega-N-methylarginine. A phosphoserine mark is found at Ser-490 and Ser-492. Thr-498 bears the Phosphothreonine mark. An Omega-N-methylarginine modification is found at Arg-504. Residues 542–556 (GPVPDPARAPDPPAP) are compositionally biased toward pro residues. A compositionally biased stretch (low complexity) spans 557–571 (DSAYCSSSSSSSSLS). Position 633 is an omega-N-methylarginine (Arg-633). Positions 634–644 (GRMDTQPDRKP) are enriched in basic and acidic residues. A Phosphoserine modification is found at Ser-657.

The protein belongs to the GAS2 family. As to quaternary structure, interacts with MAPRE1.

It is found in the cytoplasm. It localises to the cytoskeleton. The protein localises to the stress fiber. In terms of biological role, involved in the cross-linking of microtubules and microfilaments. Regulates microtubule dynamics and stability by interacting with microtubule plus-end tracking proteins, such as MAPRE1, to regulate microtubule growth along actin stress fibers. This Homo sapiens (Human) protein is GAS2-like protein 1 (GAS2L1).